We begin with the raw amino-acid sequence, 288 residues long: Elongation factor Ts (288 aa).

The tract at residues threonine 82–valine 85 is involved in Mg(2+) ion dislocation from EF-Tu.

This sequence belongs to the EF-Ts family.

It is found in the cytoplasm. Functionally, associates with the EF-Tu.GDP complex and induces the exchange of GDP to GTP. It remains bound to the aminoacyl-tRNA.EF-Tu.GTP complex up to the GTP hydrolysis stage on the ribosome. In Chlorobium chlorochromatii (strain CaD3), this protein is Elongation factor Ts.